The primary structure comprises 577 residues: Outer spore wall assembly protein SHE10 (577 aa).

The N-terminal stretch at 1–23 (MGKLIKLITTLTVLVSLLQYCCE) is a signal peptide. 2 coiled-coil regions span residues 379–416 (NETR…ENVE) and 513–561 (ILRS…EEDV). Residues 525 to 545 (RERKERERKEREKAAAEEFQR) show a composition bias toward basic and acidic residues. Residues 525–577 (RERKERERKEREKAAAEEFQRQQELLLQQEEEDEEDVSYTSTSTITTTTTMTL) form a disordered region. Positions 562–577 (SYTSTSTITTTTTMTL) are enriched in low complexity.

It belongs to the SHE10 family. In terms of assembly, component of the mitochondria-localized RNase mitochondrial RNA-processing (RNase MRP) composed of one single RNA encoded by the NME1 gene and at least 31 proteins. Absent in the nucleus-localized RNase MRP (NuMRP).

The protein localises to the mitochondrion. Functionally, involved in spore wall assembly. May be a component of the mitochondrial RNase MRP (MtMRP), a ribonucleoprotein endoribonuclease involved in the cleaving RNA transcripts to generate primers for DNA replication in mitochondria. In Saccharomyces cerevisiae (strain JAY291) (Baker's yeast), this protein is Outer spore wall assembly protein SHE10.